Consider the following 201-residue polypeptide: Holliday junction branch migration complex subunit RuvA (201 aa).

Positions 1-63 (MIGCLIGEVF…EDAQQLYGFI (63 aa)) are domain I. Positions 64–142 (DAQEKLIFRT…ALSVQATTGS (79 aa)) are domain II. Positions 143 to 152 (TVTSAQIQFS) are flexible linker. The segment at 152–201 (SSNSPIAEAEAALQSLGYKPIEAQKAIAAVKADYTEAADLIRAALKSMMK) is domain III.

It belongs to the RuvA family. In terms of assembly, homotetramer. Forms an RuvA(8)-RuvB(12)-Holliday junction (HJ) complex. HJ DNA is sandwiched between 2 RuvA tetramers; dsDNA enters through RuvA and exits via RuvB. An RuvB hexamer assembles on each DNA strand where it exits the tetramer. Each RuvB hexamer is contacted by two RuvA subunits (via domain III) on 2 adjacent RuvB subunits; this complex drives branch migration. In the full resolvosome a probable DNA-RuvA(4)-RuvB(12)-RuvC(2) complex forms which resolves the HJ.

The protein localises to the cytoplasm. In terms of biological role, the RuvA-RuvB-RuvC complex processes Holliday junction (HJ) DNA during genetic recombination and DNA repair, while the RuvA-RuvB complex plays an important role in the rescue of blocked DNA replication forks via replication fork reversal (RFR). RuvA specifically binds to HJ cruciform DNA, conferring on it an open structure. The RuvB hexamer acts as an ATP-dependent pump, pulling dsDNA into and through the RuvAB complex. HJ branch migration allows RuvC to scan DNA until it finds its consensus sequence, where it cleaves and resolves the cruciform DNA. The protein is Holliday junction branch migration complex subunit RuvA of Acinetobacter baylyi (strain ATCC 33305 / BD413 / ADP1).